The sequence spans 195 residues: MKVTKSDIVISAVKPEQYPSGGLPEIALAGRSNVGKSSFINSLINRKNLARTSSKPGKTQTLNFYIINDMLHFVDVPGYGFAKVSKTEREAWGRMIETYITMREELKAVVQIVDLRHKPSVDDVNMYEFLKYYGVPVIVIATKADKIPKGKWEKHAKVVKQTLDIAPSDELVLFSSETKKGKDEAWNAILAKINK.

One can recognise an EngB-type G domain in the interval 22–195 (GLPEIALAGR…WNAILAKINK (174 aa)). GTP is bound by residues 30-37 (GRSNVGKS), 57-61 (GKTQT), 75-78 (DVPG), 142-145 (TKAD), and 174-176 (FSS). Ser37 and Thr59 together coordinate Mg(2+).

This sequence belongs to the TRAFAC class TrmE-Era-EngA-EngB-Septin-like GTPase superfamily. EngB GTPase family. Mg(2+) is required as a cofactor.

Functionally, necessary for normal cell division and for the maintenance of normal septation. The protein is Probable GTP-binding protein EngB of Bacillus pumilus (strain SAFR-032).